Reading from the N-terminus, the 695-residue chain is MNNNKQPKQGNFVKNILMWVILAIVVVVGFNFFFSSNQSSVDKISYSQLMTKLDGNKIENVTMQPSDSLITVTGEYKEPVKVKGTNNFPLLGNSSSEVKNFQAYIIPTDSVVKDIQNAAKSNDVKLSVVQASSSGMWVQILSYIIPMLLFVGIFWLMMGGMGARGGGGGGNPMSFGKSRAKQQDGKTSKVRFADVAGSEEEKQELVEVVDFLKNPKKYHDLGARIPAGVLLEGPPGTGKTLLAKAVAGEAGVPFYSISGSDFVEMFVGVGASRVRDLFENAKKTAPSIIFIDEIDAVGRQRGAGLGGGNDEREQTLNQLLVEMDGFQDDGNSVIVIAATNRSDVLDPALLRPGRFDRKVLVGAPDVKGREAVLKVHAKNKPLASDVDLHNVATQTPGYVGADLENVLNEAALVAARQNKKEINAADIDEGMDRAMAGPAKKDRIQSMREREIVAYHEAGHAIVGLVLENGSTVRKVTVVPRGRIGGYMLALPDEEIMQPTNFHLQDQLASLMGGRLGEEIVFGVATPGASNDIEKATHIARSMVTEYGMSKKLGMVSYEGDHQVFIGRDYGQTKTYSEATAVMIDDEVRRILGEAYDRAKEAIETHREQHKAIAEALLKYETLDAKQIMSLFKTGKMPDEAAAAEVPEPKTFEESLKDANANVDDFSNINIYNGDEKTDSKPEENKEKSEDETAE.

Topologically, residues 1–15 (MNNNKQPKQGNFVKN) are cytoplasmic. A helical membrane pass occupies residues 16-36 (ILMWVILAIVVVVGFNFFFSS). The Extracellular segment spans residues 37–139 (NQSSVDKISY…QASSSGMWVQ (103 aa)). Residues 140 to 160 (ILSYIIPMLLFVGIFWLMMGG) form a helical membrane-spanning segment. Over 161 to 695 (MGARGGGGGG…KEKSEDETAE (535 aa)) the chain is Cytoplasmic. An ATP-binding site is contributed by 233-240 (GPPGTGKT). Histidine 456 contacts Zn(2+). Glutamate 457 is a catalytic residue. Residues histidine 460 and aspartate 532 each contribute to the Zn(2+) site. A disordered region spans residues 657-695 (KDANANVDDFSNINIYNGDEKTDSKPEENKEKSEDETAE). The span at 674–695 (GDEKTDSKPEENKEKSEDETAE) shows a compositional bias: basic and acidic residues.

It in the central section; belongs to the AAA ATPase family. This sequence in the C-terminal section; belongs to the peptidase M41 family. In terms of assembly, homohexamer. Zn(2+) is required as a cofactor.

It localises to the cell membrane. In terms of biological role, acts as a processive, ATP-dependent zinc metallopeptidase for both cytoplasmic and membrane proteins. Plays a role in the quality control of integral membrane proteins. This is ATP-dependent zinc metalloprotease FtsH from Lactococcus lactis subsp. lactis (strain IL1403) (Streptococcus lactis).